The chain runs to 359 residues: Heat-inducible transcription repressor HrcA (359 aa).

Belongs to the HrcA family.

Negative regulator of class I heat shock genes (grpE-dnaK-dnaJ and groELS operons). Prevents heat-shock induction of these operons. This chain is Heat-inducible transcription repressor HrcA, found in Roseiflexus castenholzii (strain DSM 13941 / HLO8).